The chain runs to 302 residues: Pathogenicity locus probable regulatory protein HrpS (302 aa).

Residues 9–237 (DDLDEERVPN…LKAAAKRHVL (229 aa)) enclose the Sigma-54 factor interaction domain. Residues 37–44 (GETGTGKD) and 99–108 (AQGGTLYLDE) contribute to the ATP site. A DNA-binding region (H-T-H motif) is located at residues 279 to 298 (IDAASLELDMPRRTLYRRIK).

Its function is as follows. Member of the two-component regulatory system HrpR/HrpS that regulates the activation of the sigma factor hrpL which itself induces the expression of hprD as well as other hrp loci which are involved in plant pathogenicity, hrmA and avr genes. Probably interacts with sigma-54. This is Pathogenicity locus probable regulatory protein HrpS (hrpS) from Pseudomonas savastanoi pv. phaseolicola (Pseudomonas syringae pv. phaseolicola).